An 88-amino-acid chain; its full sequence is Small ribosomal subunit protein uS15 (88 aa).

This sequence belongs to the universal ribosomal protein uS15 family. Part of the 30S ribosomal subunit. Forms a bridge to the 50S subunit in the 70S ribosome, contacting the 23S rRNA.

In terms of biological role, one of the primary rRNA binding proteins, it binds directly to 16S rRNA where it helps nucleate assembly of the platform of the 30S subunit by binding and bridging several RNA helices of the 16S rRNA. Forms an intersubunit bridge (bridge B4) with the 23S rRNA of the 50S subunit in the ribosome. This is Small ribosomal subunit protein uS15 from Flavobacterium psychrophilum (strain ATCC 49511 / DSM 21280 / CIP 103535 / JIP02/86).